A 141-amino-acid chain; its full sequence is Calcitonin (141 aa).

A signal peptide spans 1 to 25 (MGFQKFSPFLALSILVLLQAGSLHA). Positions 26–82 (APFRSALESSPADPATLSEDEARLLLAALVQDYVQMKASELEQEQEREGSSLDSPRS) are excised as a propeptide. At serine 43 the chain carries Phosphoserine. Disordered regions lie at residues 64-85 (SELE…SKRC) and 111-141 (IGVG…QNAN). Cysteine 85 and cysteine 91 are disulfide-bonded. Proline 116 bears the Proline amide mark. A compositionally biased stretch (basic and acidic residues) spans 118–132 (KKRDMSSDLERDHRP).

Belongs to the calcitonin family.

Its subcellular location is the secreted. Functionally, calcitonin is a peptide hormone that causes a rapid but short-lived drop in the level of calcium and phosphate in blood by promoting the incorporation of those ions in the bones. Calcitonin function is mediated by the calcitonin receptor/CALCR and the CALCR-RAMP2 (AMYR2) receptor complex. Katacalcin is a potent plasma calcium-lowering peptide. The polypeptide is Calcitonin (Homo sapiens (Human)).